We begin with the raw amino-acid sequence, 252 residues long: Small ribosomal subunit protein uS2A (252 aa).

Ser-2 is modified (N-acetylserine). Residues 209 to 252 (EVEQQVAEEATTEEAGEEEAKEEVTEEQAEATEWAEENADNVEW) are disordered. Over residues 218–252 (ATTEEAGEEEAKEEVTEEQAEATEWAEENADNVEW) the composition is skewed to acidic residues.

This sequence belongs to the universal ribosomal protein uS2 family. In terms of assembly, component of the small ribosomal subunit. Mature ribosomes consist of a small (40S) and a large (60S) subunit. The 40S subunit contains about 33 different proteins and 1 molecule of RNA (18S). The 60S subunit contains about 49 different proteins and 3 molecules of RNA (25S, 5.8S and 5S). Interacts with RPS21.

The protein localises to the cytoplasm. In terms of biological role, required for the assembly and/or stability of the 40S ribosomal subunit. Required for the processing of the 20S rRNA-precursor to mature 18S rRNA in a late step of the maturation of 40S ribosomal subunits. This is Small ribosomal subunit protein uS2A from Saccharomyces cerevisiae (strain RM11-1a) (Baker's yeast).